Consider the following 198-residue polypeptide: Beta-crystallin A1 (198 aa).

The N-terminal arm stretch occupies residues 1 to 13 (MLYLVLFLVPFNS). Beta/gamma crystallin 'Greek key' domains lie at 14 to 53 (IQITIYDQENFQGKRMEFTSSCPNVSERNFDNVRSLKVEC) and 54 to 100 (GAWI…RPIC). Cys65 and Cys100 each carry S-glutathionyl cysteine; alternate. S-methylcysteine; alternate occurs at positions 65 and 100. Residues 101 to 106 (SANHKE) are connecting peptide. Beta/gamma crystallin 'Greek key' domains lie at 107–148 (SKIT…KIQC) and 149–197 (GAWV…RRIQ).

This sequence belongs to the beta/gamma-crystallin family. In terms of assembly, homo/heterodimer, or complexes of higher-order. The structure of beta-crystallin oligomers seems to be stabilized through interactions between the N-terminal arms. Interacts with CRYBA1.

Crystallins are the dominant structural components of the vertebrate eye lens. This is Beta-crystallin A1 from Mus musculus (Mouse).